Reading from the N-terminus, the 117-residue chain is WLMIIEQKCNIIVMLAECVEAGKPKCHKYWPNDNMEETYGIVSVTNKEEIKYCGFTRRILLVSAKLKDGSVLTTVTQYHFTKWPDHGVPQTTSAIIRMHREIMKANKDLIGQSPIVV.

One can recognise a Tyrosine-protein phosphatase domain in the interval 1–117 (WLMIIEQKCN…DLIGQSPIVV (117 aa)). Position 85 (Asp85) interacts with substrate.

Belongs to the protein-tyrosine phosphatase family.

The catalysed reaction is O-phospho-L-tyrosyl-[protein] + H2O = L-tyrosyl-[protein] + phosphate. This chain is Tyrosine-protein phosphatase 25 (STY-25), found in Styela plicata (Wrinkled sea squirt).